A 1089-amino-acid polypeptide reads, in one-letter code: Importin subunit beta-3 (1089 aa).

Residue Ser-2 is modified to N-acetylserine. 24 HEAT repeats span residues 6–39 (EEVN…EEWI), 44–78 (IEYL…ALKA), 96–129 (KEVL…IAEC), 138–165 (PELL…ILTT), 175–207 (INSI…YFKQ), 216–252 (LGIL…LVEL), 260–295 (MFDQ…FSEN), 304–359 (QNYG…ALKL), 361–395 (GEYL…SSAA), 399–439 (ADVL…STDF), 441–481 (PFIQ…FSEF), 484–524 (KDIL…AEAA), 526–568 (NKFI…GFAV), 571–613 (EKFH…CRIL), 615–689 (DDFV…ATLL), 692–735 (QFAV…LLAA), 742–781 (ELVL…IKVM), 788–849 (EDQL…LKTT), 852–890 (HYLK…IQYG), 898–930 (KNAF…CAQY), 938–978 (VCIP…LYAY), 986–1017 (DTYT…QLIE), 1028–1063 (NISA…LLGF), and 1066–1089 (SSDA…KWFA). Thr-830 carries the phosphothreonine modification.

Belongs to the importin beta family. Importin beta-3 subfamily. Interacts with Ran (GSP1); interacts specifically with the GTP-bound form of Ran (GTP-Ran), protecting it from GTP hydrolysis and nucleotide exchange. Interacts with RPL25; this interaction is dissociated by binding to Ran-GTP. Interacts with YAP1; this interaction is dissociated by binding to Ran-GTP. Interacts with NOP1; via its rg-NLS. Interacts with SOF1; via its cNLS. Interacts with histones H3 and H4; via their NLS. Interacts with ABF1.

Its subcellular location is the cytoplasm. The protein localises to the nucleus. In terms of biological role, functions in nuclear protein import as nuclear transport receptor. Serves as receptor for classical and arginine/glycine-rich nuclear localization signals (cNLS and rg-NLS) in cargo substrates. Its predominant cargo substrate seems to be ribosomal proteins and ribosome biogenesis trans- and cis-acting factors. Required for nuclear transport of YAP1, NOP1 and SOF1. Mediates the nuclear import of histones H3 and H4. Mediates docking of the importin/substrate complex to the nuclear pore complex (NPC) through binding to repeat-containing nucleoporins. The complex is subsequently translocated through the pore by an energy requiring, Ran-dependent mechanism. At the nucleoplasmic side of the NPC, GTP-Ran binding leads to release of the cargo. The importin is re-exported from the nucleus to the cytoplasm where GTP hydrolysis releases Ran from importin. The directionality of nuclear import is thought to be conferred by an asymmetric distribution of the GTP- and GDP-bound forms of Ran between the cytoplasm and nucleus. Functionally, plays a role in protein secretion. The chain is Importin subunit beta-3 from Saccharomyces cerevisiae (strain ATCC 204508 / S288c) (Baker's yeast).